We begin with the raw amino-acid sequence, 491 residues long: Cobyric acid synthase (491 aa).

The 177-residue stretch at 253-429 (AHRVAVVRLP…WHGSLEGDAL (177 aa)) folds into the GATase cobBQ-type domain. The active-site Nucleophile is the cysteine 334. Histidine 421 is an active-site residue.

It belongs to the CobB/CobQ family. CobQ subfamily.

It participates in cofactor biosynthesis; adenosylcobalamin biosynthesis. Catalyzes amidations at positions B, D, E, and G on adenosylcobyrinic A,C-diamide. NH(2) groups are provided by glutamine, and one molecule of ATP is hydrogenolyzed for each amidation. This is Cobyric acid synthase from Mycobacterium ulcerans (strain Agy99).